A 380-amino-acid chain; its full sequence is Tryptophan 2,3-dioxygenase (380 aa).

Substrate contacts are provided by residues 57–61 and Arg128; that span reads FIITH. His313 contributes to the heme binding site. Residue Thr328 coordinates substrate.

The protein belongs to the tryptophan 2,3-dioxygenase family. In terms of assembly, homotetramer. Dimer of dimers. The cofactor is heme.

It catalyses the reaction L-tryptophan + O2 = N-formyl-L-kynurenine. It participates in amino-acid degradation; L-tryptophan degradation via kynurenine pathway; L-kynurenine from L-tryptophan: step 1/2. The protein operates within pigment biosynthesis; ommochrome biosynthesis. Heme-dependent dioxygenase that catalyzes the oxidative cleavage of the L-tryptophan (L-Trp) pyrrole ring and converts L-tryptophan to N-formyl-L-kynurenine. Catalyzes the oxidative cleavage of the indole moiety. This is Tryptophan 2,3-dioxygenase from Drosophila ananassae (Fruit fly).